A 159-amino-acid chain; its full sequence is Dihydrofolate reductase (159 aa).

In terms of domain architecture, DHFR spans 1 to 158; it reads MISLIAALAV…HSYCFEILER (158 aa). Residue I5 participates in substrate binding. Residues A7 and 13-19 contribute to the NADP(+) site; that span reads VIGMENA. Position 27 (D27) interacts with substrate. 45–46 serves as a coordination point for NADP(+); sequence LT. Residues R52 and R57 each contribute to the substrate site. Residues 63 to 64, K76, and 95 to 102 each bind NADP(+); these read SS and GGGRVYEQ. A substrate-binding site is contributed by T113.

This sequence belongs to the dihydrofolate reductase family.

It catalyses the reaction (6S)-5,6,7,8-tetrahydrofolate + NADP(+) = 7,8-dihydrofolate + NADPH + H(+). The protein operates within cofactor biosynthesis; tetrahydrofolate biosynthesis; 5,6,7,8-tetrahydrofolate from 7,8-dihydrofolate: step 1/1. Key enzyme in folate metabolism. Catalyzes an essential reaction for de novo glycine and purine synthesis, and for DNA precursor synthesis. This Klebsiella aerogenes (Enterobacter aerogenes) protein is Dihydrofolate reductase (folA).